Consider the following 138-residue polypeptide: Prefoldin subunit alpha (138 aa).

The protein belongs to the prefoldin subunit alpha family. In terms of assembly, heterohexamer of two alpha and four beta subunits.

The protein resides in the cytoplasm. Molecular chaperone capable of stabilizing a range of proteins. Seems to fulfill an ATP-independent, HSP70-like function in archaeal de novo protein folding. The sequence is that of Prefoldin subunit alpha from Methanococcoides burtonii (strain DSM 6242 / NBRC 107633 / OCM 468 / ACE-M).